Reading from the N-terminus, the 191-residue chain is DNA-directed RNA polymerase subunit Rpo3 (191 aa).

Belongs to the archaeal Rpo3/eukaryotic RPB3 RNA polymerase subunit family. Part of the RNA polymerase complex. Interacts with Rpo12. Forms an Rpo3-Rpo10-Rpo11-Rpo12 complex upon coexpression.

It is found in the cytoplasm. It catalyses the reaction RNA(n) + a ribonucleoside 5'-triphosphate = RNA(n+1) + diphosphate. Its function is as follows. DNA-dependent RNA polymerase (RNAP) catalyzes the transcription of DNA into RNA using the four ribonucleoside triphosphates as substrates. The chain is DNA-directed RNA polymerase subunit Rpo3 from Methanocaldococcus jannaschii (strain ATCC 43067 / DSM 2661 / JAL-1 / JCM 10045 / NBRC 100440) (Methanococcus jannaschii).